Consider the following 68-residue polypeptide: Protein P34 (68 aa).

Helical transmembrane passes span 4 to 24 (FVGP…LAVL) and 41 to 61 (GFSS…GFAM).

The protein resides in the virion membrane. This chain is Protein P34 (XXXIV), found in Acinetobacter calcoaceticus (Arthrobacter siderocapsulatus).